The following is a 456-amino-acid chain: Bifunctional protein GlmU (456 aa).

The pyrophosphorylase stretch occupies residues 1–229 (MTKKALSAVI…VMEVEGANNR (229 aa)). UDP-N-acetyl-alpha-D-glucosamine contacts are provided by residues 11 to 14 (LAAG), Lys25, Gln76, 81 to 82 (GT), 103 to 105 (YGD), Gly140, Glu154, Asn169, and Asn227. Residue Asp105 participates in Mg(2+) binding. Asn227 contacts Mg(2+). The linker stretch occupies residues 230 to 250 (LQLAALERYLQNKQASKLLLE). Residues 251–456 (GVMIYDPARF…QGWQRPIKKK (206 aa)) are N-acetyltransferase. Arg333 and Lys351 together coordinate UDP-N-acetyl-alpha-D-glucosamine. Catalysis depends on His363, which acts as the Proton acceptor. The UDP-N-acetyl-alpha-D-glucosamine site is built by Tyr366 and Asn377. Residues Ala380, 386–387 (NY), Ser405, Ala423, and Arg440 contribute to the acetyl-CoA site.

It in the N-terminal section; belongs to the N-acetylglucosamine-1-phosphate uridyltransferase family. The protein in the C-terminal section; belongs to the transferase hexapeptide repeat family. As to quaternary structure, homotrimer. It depends on Mg(2+) as a cofactor.

It is found in the cytoplasm. It catalyses the reaction alpha-D-glucosamine 1-phosphate + acetyl-CoA = N-acetyl-alpha-D-glucosamine 1-phosphate + CoA + H(+). The catalysed reaction is N-acetyl-alpha-D-glucosamine 1-phosphate + UTP + H(+) = UDP-N-acetyl-alpha-D-glucosamine + diphosphate. It functions in the pathway nucleotide-sugar biosynthesis; UDP-N-acetyl-alpha-D-glucosamine biosynthesis; N-acetyl-alpha-D-glucosamine 1-phosphate from alpha-D-glucosamine 6-phosphate (route II): step 2/2. It participates in nucleotide-sugar biosynthesis; UDP-N-acetyl-alpha-D-glucosamine biosynthesis; UDP-N-acetyl-alpha-D-glucosamine from N-acetyl-alpha-D-glucosamine 1-phosphate: step 1/1. Its pathway is bacterial outer membrane biogenesis; LPS lipid A biosynthesis. Catalyzes the last two sequential reactions in the de novo biosynthetic pathway for UDP-N-acetylglucosamine (UDP-GlcNAc). The C-terminal domain catalyzes the transfer of acetyl group from acetyl coenzyme A to glucosamine-1-phosphate (GlcN-1-P) to produce N-acetylglucosamine-1-phosphate (GlcNAc-1-P), which is converted into UDP-GlcNAc by the transfer of uridine 5-monophosphate (from uridine 5-triphosphate), a reaction catalyzed by the N-terminal domain. In Haemophilus influenzae (strain PittGG), this protein is Bifunctional protein GlmU.